We begin with the raw amino-acid sequence, 166 residues long: 16S rRNA aminocarboxypropyltransferase (166 aa).

S-adenosyl-L-methionine-binding residues include Thr-17, Ile-62, Leu-84, Tyr-99, and Ser-103.

The protein belongs to the TDD superfamily. TSR3 family.

The protein localises to the cytoplasm. It catalyses the reaction an N(1)-methylpseudouridine in rRNA + S-adenosyl-L-methionine = N(1)-methyl-N(3)-[(3S)-3-amino-3-carboxypropyl]pseudouridine in rRNA + S-methyl-5'-thioadenosine + H(+). Functionally, aminocarboxypropyltransferase that catalyzes the aminocarboxypropyl transfer on pseudouridine corresponding to position 914 in M.jannaschii 16S rRNA. It constitutes the last step in biosynthesis of the hypermodified N1-methyl-N3-(3-amino-3-carboxypropyl) pseudouridine (m1acp3-Psi). This is 16S rRNA aminocarboxypropyltransferase from Saccharolobus islandicus (strain M.16.27) (Sulfolobus islandicus).